Here is a 265-residue protein sequence, read N- to C-terminus: Anamorsin homolog (265 aa).

Positions 1-147 are N-terminal SAM-like domain; the sequence is MDAAKMYGAV…WKIGSSFALK (147 aa). A linker region spans residues 147–176; it reads KKVVKSSPKVQIDFDSDLIDENSLLSEEDL. Cysteine 186, cysteine 195, cysteine 198, and cysteine 200 together coordinate [2Fe-2S] cluster. The interval 186–200 is fe-S binding site A; sequence CEIGPTRKACKNCSC. [4Fe-4S] cluster is bound by residues cysteine 226, cysteine 229, cysteine 237, and cysteine 240. Short sequence motifs (cx2C motif) lie at residues 226–229 and 237–240; these read CGSC and CSTC. The segment at 226-240 is fe-S binding site B; sequence CGSCGLGDAFRCSTC.

This sequence belongs to the anamorsin family. Monomer. The cofactor is [2Fe-2S] cluster. It depends on [4Fe-4S] cluster as a cofactor.

It localises to the cytoplasm. It is found in the mitochondrion intermembrane space. Its function is as follows. Component of the cytosolic iron-sulfur (Fe-S) protein assembly (CIA) machinery. Required for the maturation of extramitochondrial Fe-S proteins. Part of an electron transfer chain functioning in an early step of cytosolic Fe-S biogenesis, facilitating the de novo assembly of a [4Fe-4S] cluster on the cytosolic Fe-S scaffold complex. Electrons are transferred from NADPH via a FAD- and FMN-containing diflavin oxidoreductase. Together with the diflavin oxidoreductase, also required for the assembly of the diferric tyrosyl radical cofactor of ribonucleotide reductase (RNR), probably by providing electrons for reduction during radical cofactor maturation in the catalytic small subunit. The sequence is that of Anamorsin homolog from Medicago truncatula (Barrel medic).